Consider the following 867-residue polypeptide: E3 ubiquitin-protein ligase SH3RF1 (867 aa).

The RING-type zinc finger occupies 12–53 (CPVCLERLDATAKVLPCQHTFCRRCLLGIVGSRGELRCPECR). Positions 101 to 127 (AQGAGGSQRDPGPTGGQSQRVQAKSTP) are disordered. Positions 116–125 (GQSQRVQAKS) are enriched in polar residues. SH3 domains are found at residues 132–191 (PQLP…VIKP) and 194–257 (QPPP…FNSA). A disordered region spans residues 265–328 (DKPSEGGGDS…PPPQRHSMEI (64 aa)). A compositionally biased stretch (low complexity) spans 275 to 285 (SEGPSSSSSGP). Residues 436-497 (QRPTVYVAMF…PGNYMSPVSR (62 aa)) enclose the SH3 3 domain. The segment at 706 to 794 (LSNKKKLRPS…APIAPPPRQP (89 aa)) is disordered. A compositionally biased stretch (low complexity) spans 760 to 769 (SELSMSSSSS). The segment covering 770–784 (NTDAVTHRSSPQDNT) has biased composition (polar residues). An SH3 4 domain is found at 808 to 867 (IVCERYRVVVSYPPQSEAELELKEGDIVFVHKKREDGWFKGTLQRNGRTGLFPGSFVDSI).

This sequence belongs to the SH3RF family. In terms of processing, autoubiquitinated. Ubiquitinated by SH3RF2, leading to proteasome-mediated degradation.

It localises to the cytoplasm. Its subcellular location is the perinuclear region. The protein localises to the cell projection. It is found in the lamellipodium. The protein resides in the golgi apparatus. It localises to the trans-Golgi network. It catalyses the reaction S-ubiquitinyl-[E2 ubiquitin-conjugating enzyme]-L-cysteine + [acceptor protein]-L-lysine = [E2 ubiquitin-conjugating enzyme]-L-cysteine + N(6)-ubiquitinyl-[acceptor protein]-L-lysine.. The protein operates within protein modification; protein ubiquitination. Its function is as follows. Has E3 ubiquitin-protein ligase activity. In the absence of an external substrate, it can catalyze self-ubiquitination. Acts as a scaffold protein that contributes to the effective activation of the JNK signaling pathway. The sequence is that of E3 ubiquitin-protein ligase SH3RF1 (sh3rf1) from Danio rerio (Zebrafish).